The sequence spans 218 residues: E3 ubiquitin-protein ligase MARCHF3 (218 aa).

The RING-CH-type zinc-finger motif lies at 63–123 (SPFNDRPMCR…ELCHFRFAVE (61 aa)). Zn(2+) is bound by residues Cys-71, Cys-74, Cys-87, Cys-89, His-97, Cys-100, Cys-113, and Cys-116. 2 consecutive transmembrane segments (helical) span residues 145 to 165 (LFGDMVCFLFITPLATISGWL) and 180 to 200 (LEAVGLIALTVALFTIYLFWT).

Interacts with MARCHF2 and STX6.

The protein resides in the cytoplasmic vesicle membrane. It is found in the early endosome membrane. The catalysed reaction is S-ubiquitinyl-[E2 ubiquitin-conjugating enzyme]-L-cysteine + [acceptor protein]-L-lysine = [E2 ubiquitin-conjugating enzyme]-L-cysteine + N(6)-ubiquitinyl-[acceptor protein]-L-lysine.. The protein operates within protein modification; protein ubiquitination. In terms of biological role, E3 ubiquitin-protein ligase which may be involved in endosomal trafficking. E3 ubiquitin ligases accept ubiquitin from an E2 ubiquitin-conjugating enzyme in the form of a thioester and then directly transfer the ubiquitin to targeted substrates. This is E3 ubiquitin-protein ligase MARCHF3 (Marchf3) from Mus musculus (Mouse).